A 141-amino-acid polypeptide reads, in one-letter code: Large ribosomal subunit protein uL16 (141 aa).

The disordered stretch occupies residues 1–23 (MLMPKRTKWRKQQKGRNRGKSFR).

The protein belongs to the universal ribosomal protein uL16 family. In terms of assembly, part of the 50S ribosomal subunit.

Binds 23S rRNA and is also seen to make contacts with the A and possibly P site tRNAs. The polypeptide is Large ribosomal subunit protein uL16 (Sulfurovum sp. (strain NBC37-1)).